The chain runs to 361 residues: Caveolae-associated protein 4 (361 aa).

Positions 1–21 are disordered; that stretch reads MEHNGSASNADKIHQNRLSNV. Positions 100–124 form a coiled coil; it reads IKDVKARVEKQQTHVKKVEAKQEEI. Phosphoserine is present on residues serine 152, serine 171, and serine 172. A coiled-coil region spans residues 204–248; that stretch reads ENMQKTRQNFDKKVNRIRTRIVTPERRERLRQSGERLRQSGERLK. A compositionally biased stretch (basic and acidic residues) spans 230–255; that stretch reads RERLRQSGERLRQSGERLKQSGERFK. 2 disordered regions span residues 230–283 and 310–346; these read RERL…AVAE and PEAL…FKPQ. Threonine 335 is modified (phosphothreonine). At serine 354 the chain carries Phosphoserine.

It belongs to the CAVIN family. In terms of assembly, component of the CAVIN complex composed of CAVIN1, CAVIN2, CAVIN3 and CAVIN4. Interacts with CAVIN1, ADRA1A, ADRA1B, MAPK1 and MAPK3. Interacts with CAVIN2; this augments the transactivation of NPPA.

The protein localises to the cytoplasm. It is found in the myofibril. The protein resides in the sarcomere. Its subcellular location is the cytosol. It localises to the cell membrane. The protein localises to the sarcolemma. It is found in the membrane. The protein resides in the caveola. In terms of biological role, modulates the morphology of formed caveolae in cardiomyocytes, but is not required for caveolar formation. Facilitates the recruitment of MAPK1/3 to caveolae within cardiomyocytes and regulates alpha-1 adrenergic receptor-induced hypertrophic responses in cardiomyocytes through MAPK1/3 activation. Contributes to proper membrane localization and stabilization of caveolin-3 (CAV3) in cardiomyocytes. Induces RHOA activation and activates NPPA transcription and myofibrillar organization through the Rho/ROCK signaling pathway. The chain is Caveolae-associated protein 4 (CAVIN4) from Bos taurus (Bovine).